Consider the following 369-residue polypeptide: Transposase for insertion sequence element IS1201 (369 aa).

This sequence belongs to the transposase mutator family.

In terms of biological role, required for the transposition of the insertion element. The sequence is that of Transposase for insertion sequence element IS1201 from Lactobacillus helveticus (Lactobacillus suntoryeus).